The following is a 412-amino-acid chain: Argininosuccinate synthase (412 aa).

Residues 12-20 and Ala-39 contribute to the ATP site; that span reads AYSGGLDTS. Residues Tyr-91 and Ser-96 each coordinate L-citrulline. Gly-121 provides a ligand contact to ATP. 3 residues coordinate L-aspartate: Thr-123, Asn-127, and Asp-128. Residue Asn-127 participates in L-citrulline binding. Residues Arg-131, Ser-180, Ser-189, Glu-265, and Tyr-277 each contribute to the L-citrulline site.

The protein belongs to the argininosuccinate synthase family. Type 1 subfamily. As to quaternary structure, homotetramer.

The protein resides in the cytoplasm. The catalysed reaction is L-citrulline + L-aspartate + ATP = 2-(N(omega)-L-arginino)succinate + AMP + diphosphate + H(+). It participates in amino-acid biosynthesis; L-arginine biosynthesis; L-arginine from L-ornithine and carbamoyl phosphate: step 2/3. This is Argininosuccinate synthase from Pseudoalteromonas atlantica (strain T6c / ATCC BAA-1087).